Here is a 1171-residue protein sequence, read N- to C-terminus: ATP-dependent helicase/deoxyribonuclease subunit B (1171 aa).

The region spanning 1-390 (MSLRFVIGRA…HPLVECIRSA (390 aa)) is the UvrD-like helicase ATP-binding domain. 8–15 (GRAGSGKS) serves as a coordination point for ATP. In terms of domain architecture, UvrD-like helicase C-terminal spans 281 to 587 (MEQPRFHSPA…QFANIPPSLD (307 aa)). 4 residues coordinate [4Fe-4S] cluster: cysteine 805, cysteine 1129, cysteine 1132, and cysteine 1138.

The protein belongs to the helicase family. AddB/RexB type 1 subfamily. As to quaternary structure, heterodimer of AddA and AddB. It depends on Mg(2+) as a cofactor. The cofactor is [4Fe-4S] cluster.

In terms of biological role, the heterodimer acts as both an ATP-dependent DNA helicase and an ATP-dependent, dual-direction single-stranded exonuclease. Recognizes the chi site generating a DNA molecule suitable for the initiation of homologous recombination. The AddB subunit has 5' -&gt; 3' nuclease activity but not helicase activity. In Bacillus cereus (strain ATCC 14579 / DSM 31 / CCUG 7414 / JCM 2152 / NBRC 15305 / NCIMB 9373 / NCTC 2599 / NRRL B-3711), this protein is ATP-dependent helicase/deoxyribonuclease subunit B.